The following is a 166-amino-acid chain: Large ribosomal subunit protein uL10 (166 aa).

The protein belongs to the universal ribosomal protein uL10 family. Part of the ribosomal stalk of the 50S ribosomal subunit. The N-terminus interacts with L11 and the large rRNA to form the base of the stalk. The C-terminus forms an elongated spine to which L12 dimers bind in a sequential fashion forming a multimeric L10(L12)X complex.

In terms of biological role, forms part of the ribosomal stalk, playing a central role in the interaction of the ribosome with GTP-bound translation factors. This Limosilactobacillus reuteri (strain DSM 20016) (Lactobacillus reuteri) protein is Large ribosomal subunit protein uL10.